Here is a 201-residue protein sequence, read N- to C-terminus: Holliday junction branch migration complex subunit RuvA (201 aa).

Residues 1-64 (MIGRLHGKII…EDAHLLFGFA (64 aa)) form a domain I region. Residues 65-143 (QKQDRTLFRE…GVAQSDFFEE (79 aa)) are domain II. Positions 144-154 (HSVETIVATHS) are flexible linker. The interval 154–201 (SHDPADEARDALVALGYKLADAEKMIKKVNKAGATSEQLIREALKASL) is domain III.

This sequence belongs to the RuvA family. As to quaternary structure, homotetramer. Forms an RuvA(8)-RuvB(12)-Holliday junction (HJ) complex. HJ DNA is sandwiched between 2 RuvA tetramers; dsDNA enters through RuvA and exits via RuvB. An RuvB hexamer assembles on each DNA strand where it exits the tetramer. Each RuvB hexamer is contacted by two RuvA subunits (via domain III) on 2 adjacent RuvB subunits; this complex drives branch migration. In the full resolvosome a probable DNA-RuvA(4)-RuvB(12)-RuvC(2) complex forms which resolves the HJ.

The protein localises to the cytoplasm. In terms of biological role, the RuvA-RuvB-RuvC complex processes Holliday junction (HJ) DNA during genetic recombination and DNA repair, while the RuvA-RuvB complex plays an important role in the rescue of blocked DNA replication forks via replication fork reversal (RFR). RuvA specifically binds to HJ cruciform DNA, conferring on it an open structure. The RuvB hexamer acts as an ATP-dependent pump, pulling dsDNA into and through the RuvAB complex. HJ branch migration allows RuvC to scan DNA until it finds its consensus sequence, where it cleaves and resolves the cruciform DNA. The sequence is that of Holliday junction branch migration complex subunit RuvA from Actinobacillus pleuropneumoniae serotype 5b (strain L20).